Here is a 430-residue protein sequence, read N- to C-terminus: Putative aspergillopepsin A-like aspartic endopeptidase MCYG_07979 (430 aa).

The N-terminal stretch at 1 to 17 is a signal peptide; the sequence is MHLSSLLVAVLLPLALS. A propeptide spans 18–87 (activation peptide); sequence KPTPRKKPGS…SKIAGGAPGA (70 aa). Positions 59 to 105 are disordered; sequence STQGMDGYRPEPISRFQGNSKIAGGAPGAKDDGKDEKGEVENNPTSH. The segment covering 87–98 has biased composition (basic and acidic residues); the sequence is AKDDGKDEKGEV. Positions 109 to 427 constitute a Peptidase A1 domain; the sequence is FLSPVTIGGQ…DYRGPSVSLA (319 aa). Residue D125 is part of the active site. N306 carries an N-linked (GlcNAc...) asparagine glycan. D314 is a catalytic residue. N-linked (GlcNAc...) asparagine glycosylation occurs at N352.

This sequence belongs to the peptidase A1 family.

The protein localises to the secreted. This Arthroderma otae (strain ATCC MYA-4605 / CBS 113480) (Microsporum canis) protein is Putative aspergillopepsin A-like aspartic endopeptidase MCYG_07979.